The chain runs to 91 residues: Small membrane A-kinase anchor protein (91 aa).

Gly2 carries N-myristoyl glycine lipidation.

The protein belongs to the small membrane AKAP family. May be palmitoylated at Cys-3.

It localises to the cell membrane. Its function is as follows. Binds to type I regulatory subunits of protein kinase A and may anchor/target them to the plasma membrane. The protein is Small membrane A-kinase anchor protein of Xenopus laevis (African clawed frog).